A 454-amino-acid polypeptide reads, in one-letter code: Chaperone SurA (454 aa).

A signal peptide spans 1–28 (MKISSFRKGRWLGALALFAVVCWSMADA). 2 consecutive PpiC domains span residues 177–278 (DREY…KMLA) and 287–386 (LTKT…QVLE). The segment at 431–454 (LDETPASPGEDAPAGEDSPETFMR) is disordered. Acidic residues predominate over residues 443 to 454 (PAGEDSPETFMR).

It is found in the periplasm. It catalyses the reaction [protein]-peptidylproline (omega=180) = [protein]-peptidylproline (omega=0). Its function is as follows. Chaperone involved in the correct folding and assembly of outer membrane proteins. Recognizes specific patterns of aromatic residues and the orientation of their side chains, which are found more frequently in integral outer membrane proteins. May act in both early periplasmic and late outer membrane-associated steps of protein maturation. The chain is Chaperone SurA from Methylococcus capsulatus (strain ATCC 33009 / NCIMB 11132 / Bath).